The chain runs to 436 residues: UDP-N-acetylmuramate--L-alanine ligase (436 aa).

108-114 (GAHGKTS) is an ATP binding site.

The protein belongs to the MurCDEF family.

The protein resides in the cytoplasm. It carries out the reaction UDP-N-acetyl-alpha-D-muramate + L-alanine + ATP = UDP-N-acetyl-alpha-D-muramoyl-L-alanine + ADP + phosphate + H(+). It functions in the pathway cell wall biogenesis; peptidoglycan biosynthesis. Functionally, cell wall formation. The protein is UDP-N-acetylmuramate--L-alanine ligase of Bacillus cereus (strain G9842).